The sequence spans 180 residues: Probable chorismate pyruvate-lyase (180 aa).

Residues Arg76, Leu113, and Glu171 each contribute to the substrate site.

The protein belongs to the UbiC family.

Its subcellular location is the cytoplasm. The catalysed reaction is chorismate = 4-hydroxybenzoate + pyruvate. The protein operates within cofactor biosynthesis; ubiquinone biosynthesis. In terms of biological role, removes the pyruvyl group from chorismate, with concomitant aromatization of the ring, to provide 4-hydroxybenzoate (4HB) for the ubiquinone pathway. The protein is Probable chorismate pyruvate-lyase of Pseudoalteromonas translucida (strain TAC 125).